A 580-amino-acid polypeptide reads, in one-letter code: Rap guanine nucleotide exchange factor 5 (580 aa).

An N-terminal Ras-GEF domain is found at 68-201 (DRYVVVSGTP…ELKEFQKILG (134 aa)). Residues 345-579 (NTWDLALELM…FELSHRIEPR (235 aa)) form the Ras-GEF domain.

As to expression, widely expressed with highest levels in brain.

Its subcellular location is the nucleus. Its function is as follows. Guanine nucleotide exchange factor (GEF) for RAP1A, RAP2A and MRAS/M-Ras-GTP. Its association with MRAS inhibits Rap1 activation. This Homo sapiens (Human) protein is Rap guanine nucleotide exchange factor 5 (RAPGEF5).